The following is a 188-amino-acid chain: ATP-dependent Clp protease proteolytic subunit 1 (188 aa).

The Nucleophile role is filled by Ser90. His115 is a catalytic residue.

The protein belongs to the peptidase S14 family. In terms of assembly, fourteen ClpP subunits assemble into 2 heptameric rings which stack back to back to give a disk-like structure with a central cavity, resembling the structure of eukaryotic proteasomes.

Its subcellular location is the cytoplasm. The catalysed reaction is Hydrolysis of proteins to small peptides in the presence of ATP and magnesium. alpha-casein is the usual test substrate. In the absence of ATP, only oligopeptides shorter than five residues are hydrolyzed (such as succinyl-Leu-Tyr-|-NHMec, and Leu-Tyr-Leu-|-Tyr-Trp, in which cleavage of the -Tyr-|-Leu- and -Tyr-|-Trp bonds also occurs).. In terms of biological role, cleaves peptides in various proteins in a process that requires ATP hydrolysis. Has a chymotrypsin-like activity. Plays a major role in the degradation of misfolded proteins. This is ATP-dependent Clp protease proteolytic subunit 1 from Corynebacterium jeikeium (strain K411).